We begin with the raw amino-acid sequence, 362 residues long: Putative F-box/kelch-repeat protein At3g20710 (362 aa).

The F-box domain occupies 1–50 (MMMSNLPKDLVEEILSRVPFKYLRAIRSTCKNWYDLSKNRSFANKNIDKA). Kelch repeat units follow at residues 150-201 (YDKS…VSLN) and 293-341 (IYCR…YFKS).

The chain is Putative F-box/kelch-repeat protein At3g20710 from Arabidopsis thaliana (Mouse-ear cress).